A 428-amino-acid polypeptide reads, in one-letter code: Histidinol dehydrogenase (428 aa).

Residues Tyr-125, Gln-187, and Asn-210 each contribute to the NAD(+) site. Substrate contacts are provided by Ser-234, Gln-256, and His-259. Gln-256 and His-259 together coordinate Zn(2+). Active-site proton acceptor residues include Glu-323 and His-324. Residues His-324, Asp-357, Glu-411, and His-416 each coordinate substrate. Asp-357 is a binding site for Zn(2+). Residue His-416 coordinates Zn(2+).

Belongs to the histidinol dehydrogenase family. Zn(2+) is required as a cofactor.

It carries out the reaction L-histidinol + 2 NAD(+) + H2O = L-histidine + 2 NADH + 3 H(+). It participates in amino-acid biosynthesis; L-histidine biosynthesis; L-histidine from 5-phospho-alpha-D-ribose 1-diphosphate: step 9/9. Its function is as follows. Catalyzes the sequential NAD-dependent oxidations of L-histidinol to L-histidinaldehyde and then to L-histidine. The protein is Histidinol dehydrogenase of Bacteroides thetaiotaomicron (strain ATCC 29148 / DSM 2079 / JCM 5827 / CCUG 10774 / NCTC 10582 / VPI-5482 / E50).